Consider the following 1174-residue polypeptide: Male determiner protein Mdmd(II) (1174 aa).

The span at 1-15 shows a compositional bias: basic and acidic residues; sequence MNATDAESRKPENKP. 3 disordered regions span residues 1 to 51, 80 to 109, and 136 to 259; these read MNAT…SGQR, KDGS…HPVE, and KQLS…LRRS. The span at 16 to 35 shows a compositional bias: low complexity; it reads SSESSSSGSTSGSSDGEVSS. Residues 36-47 are compositionally biased toward polar residues; it reads KTYFKNNKSKVL. A compositionally biased stretch (basic and acidic residues) spans 80 to 92; the sequence is KDGSNEMLPKEDS. The segment covering 93–102 has biased composition (polar residues); that stretch reads INTNHNYTTD. Positions 138 to 153 are enriched in low complexity; that stretch reads LSAYRSRSRSTRLSYS. The segment covering 183-200 has biased composition (basic and acidic residues); that stretch reads HGRDSSTTKRSVSRDKDN. Residues 201-223 show a composition bias toward basic residues; it reads RLRRRIGSSRSHTRSHSRFRRSE. A compositionally biased stretch (basic and acidic residues) spans 235 to 259; sequence RSQERRHERRRSMSSDYERIALRRS. The MIF4G domain occupies 348–531; the sequence is KKYIHGYINK…KVLFQVRRDG (184 aa). Residues 597–608 show a composition bias toward low complexity; sequence DSDGSFGSGSNS. The disordered stretch occupies residues 597-616; it reads DSDGSFGSGSNSETALSDCD. One can recognise an MI domain in the interval 641-757; that stretch reads ALRRTIYLTL…SWDVLDCIKL (117 aa). Over residues 840-857 the composition is skewed to low complexity; that stretch reads SAPSSSSSSSLSSELSAP. Disordered stretches follow at residues 840–1045 and 1095–1133; these read SAPS…SRTK and RKDN…NHSR. The segment covering 869 to 909 has biased composition (basic residues); it reads KKKHKGKNKKMTKKKNPSKKKEKTKKIVGKNKIAAKNKTIK. The segment covering 910–924 has biased composition (basic and acidic residues); the sequence is RRTDKDNSSSKDNFL. Low complexity predominate over residues 926–957; sequence SESSSNESISLDSLSSELFAPSSYSSSESSND. The span at 963–1001 shows a compositional bias: basic residues; that stretch reads KHKGKNKKMTKKKNPSNKREKTKKKLSKNKKAPNKNTKK. Low complexity predominate over residues 1010–1020; that stretch reads SSESSISESKS. Over residues 1034-1045 the composition is skewed to basic residues; sequence RKKRVTSKSRTK. The segment covering 1095-1118 has biased composition (basic and acidic residues); sequence RKDNYGNRQNHEISQRHDSEIKRR. A compositionally biased stretch (basic residues) spans 1119–1130; that stretch reads REERKKRHHEKN.

It belongs to the CWC22 family. In terms of assembly, component of the spliceosome C complex.

The protein localises to the nucleus speckle. Male determiner protein (M-factor) that controls male somatic sexual differentiation. Acts as a dominant factor that regulates the mRNA splicing of transformer (tra) and doublesex (dsx) transcripts and promotes expression of male splice forms of tra and dsx. Probably acts as a component of the spliceosome C complex required for mRNA splicing factor and exon-junction complex (EJC) assembly. Hinders eIF4AIII from non-specifically binding RNA and escorts it to the splicing machinery to promote EJC assembly on mature mRNAs. This is Male determiner protein Mdmd(II) from Musca domestica (House fly).